The primary structure comprises 206 residues: Hypoxanthine-guanine phosphoribosyltransferase (206 aa).

GMP-binding positions include 110–118 (DEVDDTRTT), lysine 154, and 181–187 (WIMYPWE). Catalysis depends on aspartate 114, which acts as the Proton acceptor.

This sequence belongs to the purine/pyrimidine phosphoribosyltransferase family. In terms of assembly, dimer. Requires Mg(2+) as cofactor.

It localises to the endoplasmic reticulum. It catalyses the reaction IMP + diphosphate = hypoxanthine + 5-phospho-alpha-D-ribose 1-diphosphate. The enzyme catalyses GMP + diphosphate = guanine + 5-phospho-alpha-D-ribose 1-diphosphate. Its function is as follows. Converts guanine to guanosine monophosphate, and hypoxanthine to inosine monophosphate. Transfers the 5-phosphoribosyl group from 5-phosphoribosylpyrophosphate onto the purine. Plays a central role in the generation of purine nucleotides through the purine salvage pathway. This chain is Hypoxanthine-guanine phosphoribosyltransferase (hpt1), found in Schizosaccharomyces pombe (strain 972 / ATCC 24843) (Fission yeast).